The primary structure comprises 181 residues: CDP-archaeol synthase (181 aa).

Helical transmembrane passes span 7 to 27 (VVWALWAMLPAYIPNNAAVLA), 55 to 75 (LIGTAAGTALALGLTQVTPSV), 88 to 108 (LRAGLGLAFGAMLGDIGASFL), 126 to 146 (LDFVVGALLCAFVAAPSWFTE), and 147 to 167 (TFTLPVLVVVVVATPVLHVVT).

It belongs to the CDP-archaeol synthase family. It depends on Mg(2+) as a cofactor.

Its subcellular location is the cell membrane. It carries out the reaction 2,3-bis-O-(geranylgeranyl)-sn-glycerol 1-phosphate + CTP + H(+) = CDP-2,3-bis-O-(geranylgeranyl)-sn-glycerol + diphosphate. It functions in the pathway membrane lipid metabolism; glycerophospholipid metabolism. Catalyzes the formation of CDP-2,3-bis-(O-geranylgeranyl)-sn-glycerol (CDP-archaeol) from 2,3-bis-(O-geranylgeranyl)-sn-glycerol 1-phosphate (DGGGP) and CTP. This reaction is the third ether-bond-formation step in the biosynthesis of archaeal membrane lipids. The sequence is that of CDP-archaeol synthase from Haloarcula marismortui (strain ATCC 43049 / DSM 3752 / JCM 8966 / VKM B-1809) (Halobacterium marismortui).